The sequence spans 217 residues: MSCARALAACCLWRLRTGALQPLSAYGRRISVRFCSSGMTLDNINREAVDRIIRVDHAGEYGANRIYAGQMAVLGRTSIGPVIQKMWDQEKDHLKKFNELMVAFRVRPTVLMPFWNVVGFALGAGTALLGKEGAMACTVAVEESIAHHYNNQIRTLMEKEPEKYEELLQVIKKFRDEELEHHDIGLEHDAELAPAYVVLKSVIQAGCKVAIYLSERL.

A mitochondrion-targeting transit peptide spans 1–34 (MSCARALAACCLWRLRTGALQPLSAYGRRISVRF). 2 tandem repeats follow at residues 48-129 (AVDR…TALL) and 130-217 (GKEG…SERL). A 2 X approximate tandem repeats region spans residues 48–217 (AVDRIIRVDH…KVAIYLSERL (170 aa)). Arginine 51 contributes to the NADH binding site. Fe cation is bound by residues glutamate 60, glutamate 90, histidine 93, glutamate 142, glutamate 178, and histidine 181. NADH-binding residues include lysine 208, tyrosine 212, and arginine 216.

The protein belongs to the COQ7 family. Component of a multi-subunit COQ enzyme complex. Interacts with COQ8B and COQ6. Interacts with COQ9. Requires Fe cation as cofactor.

The protein resides in the mitochondrion inner membrane. The enzyme catalyses a 5-methoxy-2-methyl-3-(all-trans-polyprenyl)benzoquinone + NADH + O2 = a 3-demethylubiquinone + NAD(+) + H2O. It functions in the pathway cofactor biosynthesis; ubiquinone biosynthesis. In terms of biological role, catalyzes the hydroxylation of the 5-methoxy-2-methyl-3-(all-trans-polyprenyl)benzoquinone at the C6 position and participates in the biosynthesis of ubiquinone. Catalyzes the reaction through a substrate-mediated reduction pathway, whereby NADH shuttles electrons to 5-methoxy-2-methyl-3-(all-trans-decaprenyl)benzoquinone, which then transfers the electrons to the two Fe(3+) centers. The binding of 5-methoxy-2-methyl-3-(all-trans-polyprenyl)benzoquinone (DMQn) mediates reduction of the diiron center by nicotinamide adenine dinucleotide (NADH) and initiates oxygen activation for subsequent DMQ hydroxylation. The physiological substrates are 5-methoxy-2-methyl-3-(all-trans-nonaprenyl)benzoquinone (DMQ(9)) and 5-methoxy-2-methyl-3-(all-trans-decaprenyl)benzoquinone (DMQ(10)), however in vitro the enzyme does not have any specificity concerning the length of the polyprenyl tail, and accepts tails of various lengths with similar efficiency. Also has a structural role in the COQ enzyme complex, stabilizing other COQ polypeptides. Involved in lifespan determination in a ubiquinone-independent manner. Plays a role in modulating mitochondrial stress responses, acting in the nucleus, perhaps via regulating gene expression, independent of its characterized mitochondrial function in ubiquinone biosynthesis. In Bos taurus (Bovine), this protein is NADPH-dependent 3-demethoxyubiquinone 3-hydroxylase, mitochondrial.